We begin with the raw amino-acid sequence, 295 residues long: 33 kDa chaperonin (295 aa).

2 disulfide bridges follow: C238-C240 and C271-C274.

Belongs to the HSP33 family. Post-translationally, under oxidizing conditions two disulfide bonds are formed involving the reactive cysteines. Under reducing conditions zinc is bound to the reactive cysteines and the protein is inactive.

Its subcellular location is the cytoplasm. Redox regulated molecular chaperone. Protects both thermally unfolding and oxidatively damaged proteins from irreversible aggregation. Plays an important role in the bacterial defense system toward oxidative stress. The polypeptide is 33 kDa chaperonin (Clostridium botulinum (strain Eklund 17B / Type B)).